The sequence spans 307 residues: Oxygen-dependent coproporphyrinogen-III oxidase (307 aa).

Position 99 (S99) interacts with substrate. 2 residues coordinate a divalent metal cation: H103 and H113. H113 functions as the Proton donor in the catalytic mechanism. Residue 115-117 (NVR) participates in substrate binding. A divalent metal cation contacts are provided by H152 and H182. Residues 247–282 (YVEFNLVFDRGTLFGLQSGGRTESILLSMPPTAGWR) form an important for dimerization region. Substrate is bound at residue 265 to 267 (GGR).

The protein belongs to the aerobic coproporphyrinogen-III oxidase family. Homodimer. It depends on a divalent metal cation as a cofactor.

It localises to the cytoplasm. The enzyme catalyses coproporphyrinogen III + O2 + 2 H(+) = protoporphyrinogen IX + 2 CO2 + 2 H2O. The protein operates within porphyrin-containing compound metabolism; protoporphyrin-IX biosynthesis; protoporphyrinogen-IX from coproporphyrinogen-III (O2 route): step 1/1. In terms of biological role, involved in the heme biosynthesis. Catalyzes the aerobic oxidative decarboxylation of propionate groups of rings A and B of coproporphyrinogen-III to yield the vinyl groups in protoporphyrinogen-IX. The sequence is that of Oxygen-dependent coproporphyrinogen-III oxidase from Burkholderia pseudomallei (strain 1106a).